Consider the following 257-residue polypeptide: Distal membrane-arm assembly complex protein 2 (257 aa).

Serine 253 carries the post-translational modification Phosphoserine.

Belongs to the ATP synthase subunit s family. In terms of assembly, interacts with incompletely assembled mitochondrial NADH:ubiquinone oxidoreductase complex (complex I).

The protein localises to the mitochondrion. Functionally, required for the assembly of the mitochondrial NADH:ubiquinone oxidoreductase complex (complex I). Involved in the assembly of the distal region of complex I. The sequence is that of Distal membrane-arm assembly complex protein 2 from Homo sapiens (Human).